The sequence spans 291 residues: Undecaprenyl-diphosphatase (291 aa).

The next 8 membrane-spanning stretches (helical) occupy residues Met-1–Phe-21, Ser-48–Phe-68, Leu-102–Ile-122, Leu-126–Ala-146, Ile-162–Phe-182, Ser-203–Leu-223, Phe-236–Leu-256, and Phe-267–Ile-287.

Belongs to the UppP family.

The protein localises to the cell membrane. It carries out the reaction di-trans,octa-cis-undecaprenyl diphosphate + H2O = di-trans,octa-cis-undecaprenyl phosphate + phosphate + H(+). In terms of biological role, catalyzes the dephosphorylation of undecaprenyl diphosphate (UPP). Confers resistance to bacitracin. The polypeptide is Undecaprenyl-diphosphatase (Staphylococcus aureus (strain MSSA476)).